The following is a 247-amino-acid chain: Triosephosphate isomerase (247 aa).

Residues asparagine 10 and lysine 12 each contribute to the substrate site. The active-site Electrophile is histidine 94. Glutamate 164 functions as the Proton acceptor in the catalytic mechanism.

It belongs to the triosephosphate isomerase family. Homodimer.

It localises to the cytoplasm. The catalysed reaction is D-glyceraldehyde 3-phosphate = dihydroxyacetone phosphate. It carries out the reaction dihydroxyacetone phosphate = methylglyoxal + phosphate. It functions in the pathway carbohydrate biosynthesis; gluconeogenesis. Its pathway is carbohydrate degradation; glycolysis; D-glyceraldehyde 3-phosphate from glycerone phosphate: step 1/1. Triosephosphate isomerase is an extremely efficient metabolic enzyme that catalyzes the interconversion between dihydroxyacetone phosphate (DHAP) and D-glyceraldehyde-3-phosphate (G3P) in glycolysis and gluconeogenesis. Its function is as follows. It is also responsible for the non-negligible production of methylglyoxal a reactive cytotoxic side-product that modifies and can alter proteins, DNA and lipids. The polypeptide is Triosephosphate isomerase (Latimeria chalumnae (Coelacanth)).